The primary structure comprises 484 residues: tRNA-2-methylthio-N(6)-dimethylallyladenosine synthase (484 aa).

One can recognise an MTTase N-terminal domain in the interval Gly-36–Glu-153. The [4Fe-4S] cluster site is built by Cys-45, Cys-82, Cys-116, Cys-190, Cys-194, and Cys-197. Positions Arg-176 to Ser-415 constitute a Radical SAM core domain. Positions Gln-416–Leu-479 constitute a TRAM domain. A disordered region spans residues Glu-428 to Phe-450.

Belongs to the methylthiotransferase family. MiaB subfamily. As to quaternary structure, monomer. Requires [4Fe-4S] cluster as cofactor.

It is found in the cytoplasm. It catalyses the reaction N(6)-dimethylallyladenosine(37) in tRNA + (sulfur carrier)-SH + AH2 + 2 S-adenosyl-L-methionine = 2-methylsulfanyl-N(6)-dimethylallyladenosine(37) in tRNA + (sulfur carrier)-H + 5'-deoxyadenosine + L-methionine + A + S-adenosyl-L-homocysteine + 2 H(+). Its function is as follows. Catalyzes the methylthiolation of N6-(dimethylallyl)adenosine (i(6)A), leading to the formation of 2-methylthio-N6-(dimethylallyl)adenosine (ms(2)i(6)A) at position 37 in tRNAs that read codons beginning with uridine. The polypeptide is tRNA-2-methylthio-N(6)-dimethylallyladenosine synthase (Xanthomonas oryzae pv. oryzae (strain PXO99A)).